The chain runs to 539 residues: Probable 1,4-beta-D-glucan cellobiohydrolase B (539 aa).

The first 26 residues, 1-26 (MLPSTISYRIYKNALFFAALFGAVQA), serve as a signal peptide directing secretion. A catalytic region spans residues 27 to 461 (QKVGTSKAEV…SNIKVGPIGS (435 aa)). N-linked (GlcNAc...) asparagine glycosylation occurs at Asn-90. The active-site Nucleophile is the Glu-238. Catalysis depends on Glu-243, which acts as the Proton donor. N-linked (GlcNAc...) asparagine glycans are attached at residues Asn-296 and Asn-495. The tract at residues 462 to 503 (TFNSGGSNPGGSTTTTKPATSTTTTKATTTATTNTTGPTGTG) is thr-rich linker. Over residues 462–503 (TFNSGGSNPGGSTTTTKPATSTTTTKATTTATTNTTGPTGTG) the composition is skewed to low complexity. Residues 462 to 504 (TFNSGGSNPGGSTTTTKPATSTTTTKATTTATTNTTGPTGTGV) form a disordered region. The region spanning 503–539 (GVAQPWAQCGGIGYSGPTQCAAPYTCTKQNDYYSQCL) is the CBM1 domain. 2 disulfides stabilise this stretch: Cys-511-Cys-528 and Cys-522-Cys-538.

This sequence belongs to the glycosyl hydrolase 7 (cellulase C) family.

The protein localises to the secreted. It catalyses the reaction Hydrolysis of (1-&gt;4)-beta-D-glucosidic linkages in cellulose and cellotetraose, releasing cellobiose from the non-reducing ends of the chains.. In terms of biological role, the biological conversion of cellulose to glucose generally requires three types of hydrolytic enzymes: (1) Endoglucanases which cut internal beta-1,4-glucosidic bonds; (2) Exocellobiohydrolases that cut the disaccharide cellobiose from the non-reducing end of the cellulose polymer chain; (3) Beta-1,4-glucosidases which hydrolyze the cellobiose and other short cello-oligosaccharides to glucose. The protein is Probable 1,4-beta-D-glucan cellobiohydrolase B (cbhB) of Aspergillus clavatus (strain ATCC 1007 / CBS 513.65 / DSM 816 / NCTC 3887 / NRRL 1 / QM 1276 / 107).